The sequence spans 570 residues: Glutamate--tRNA ligase (570 aa).

Positions P107 to S117 match the 'HIGH' region motif.

It belongs to the class-I aminoacyl-tRNA synthetase family. Glutamate--tRNA ligase type 2 subfamily.

It is found in the cytoplasm. It catalyses the reaction tRNA(Glu) + L-glutamate + ATP = L-glutamyl-tRNA(Glu) + AMP + diphosphate. Functionally, catalyzes the attachment of glutamate to tRNA(Glu) in a two-step reaction: glutamate is first activated by ATP to form Glu-AMP and then transferred to the acceptor end of tRNA(Glu). This is Glutamate--tRNA ligase from Pyrobaculum calidifontis (strain DSM 21063 / JCM 11548 / VA1).